The following is a 387-amino-acid chain: Flap endonuclease 1 (387 aa).

The tract at residues 1–104 is N-domain; sequence MGILGLSKLI…GELAKRAERR (104 aa). Residue aspartate 34 participates in Mg(2+) binding. DNA-binding residues include arginine 47 and arginine 70. Residues aspartate 86, glutamate 158, glutamate 160, aspartate 179, and aspartate 181 each contribute to the Mg(2+) site. An I-domain region spans residues 122–253; it reads GIEKFNRRLV…KRAIELINNY (132 aa). Glutamate 158 is a DNA binding site. Positions 231 and 233 each coordinate DNA. Position 233 (aspartate 233) interacts with Mg(2+). An interaction with PCNA region spans residues 336–344; the sequence is TQVRLDSFF. The interval 346-387 is disordered; it reads TLPSTPNATNAAKRKAEEAKKSANNKKAKTSGGVGGRGRRPK.

It belongs to the XPG/RAD2 endonuclease family. FEN1 subfamily. As to quaternary structure, interacts with PCNA. Three molecules of FEN1 bind to one PCNA trimer with each molecule binding to one PCNA monomer. PCNA stimulates the nuclease activity without altering cleavage specificity. It depends on Mg(2+) as a cofactor. Post-translationally, phosphorylated. Phosphorylation upon DNA damage induces relocalization to the nuclear plasma.

The protein resides in the nucleus. The protein localises to the nucleolus. Its subcellular location is the nucleoplasm. It is found in the mitochondrion. Functionally, structure-specific nuclease with 5'-flap endonuclease and 5'-3' exonuclease activities involved in DNA replication and repair. During DNA replication, cleaves the 5'-overhanging flap structure that is generated by displacement synthesis when DNA polymerase encounters the 5'-end of a downstream Okazaki fragment. It enters the flap from the 5'-end and then tracks to cleave the flap base, leaving a nick for ligation. Also involved in the long patch base excision repair (LP-BER) pathway, by cleaving within the apurinic/apyrimidinic (AP) site-terminated flap. Acts as a genome stabilization factor that prevents flaps from equilibrating into structures that lead to duplications and deletions. Also possesses 5'-3' exonuclease activity on nicked or gapped double-stranded DNA, and exhibits RNase H activity. Also involved in replication and repair of rDNA and in repairing mitochondrial DNA. This Drosophila erecta (Fruit fly) protein is Flap endonuclease 1.